Consider the following 459-residue polypeptide: Vanillin aminotransferase (459 aa).

Residues 115 to 116 and aspartate 255 contribute to the pyridoxal 5'-phosphate site; that span reads GS. Lysine 284 is subject to N6-(pyridoxal phosphate)lysine. 320–321 contacts pyridoxal 5'-phosphate; the sequence is FT. The stretch at 428 to 459 forms a coiled coil; that stretch reads LSLEELDELIRIYGKALKDTEKRVEELKSQKK.

The protein belongs to the class-III pyridoxal-phosphate-dependent aminotransferase family. In terms of tissue distribution, expressed in placental tissue of immature fruit.

The catalysed reaction is vanillin + L-alanine = vanillylamine + pyruvate. Involved in the biosynthesis of capsaicinoids natural products, pungent alkaloids synthesized from phenylpropanoid intermediates in the placental tissue of chili pepper fruit acting as repellant on herbivorous mammals and conferring spiciness to hot peppers. Can transfer an amine from alanine to vanillin, forming vanillylamine and pyruvate. The sequence is that of Vanillin aminotransferase from Capsicum frutescens (Cayenne pepper).